A 469-amino-acid polypeptide reads, in one-letter code: Uronate isomerase (469 aa).

The protein belongs to the metallo-dependent hydrolases superfamily. Uronate isomerase family.

It carries out the reaction D-glucuronate = D-fructuronate. The catalysed reaction is aldehydo-D-galacturonate = keto-D-tagaturonate. The protein operates within carbohydrate metabolism; pentose and glucuronate interconversion. The protein is Uronate isomerase of Pectobacterium atrosepticum (strain SCRI 1043 / ATCC BAA-672) (Erwinia carotovora subsp. atroseptica).